We begin with the raw amino-acid sequence, 284 residues long: Bifunctional protein FolD (284 aa).

NADP(+)-binding positions include 165–167 (GAS), serine 190, and isoleucine 231.

Belongs to the tetrahydrofolate dehydrogenase/cyclohydrolase family. As to quaternary structure, homodimer.

It carries out the reaction (6R)-5,10-methylene-5,6,7,8-tetrahydrofolate + NADP(+) = (6R)-5,10-methenyltetrahydrofolate + NADPH. The enzyme catalyses (6R)-5,10-methenyltetrahydrofolate + H2O = (6R)-10-formyltetrahydrofolate + H(+). Its pathway is one-carbon metabolism; tetrahydrofolate interconversion. In terms of biological role, catalyzes the oxidation of 5,10-methylenetetrahydrofolate to 5,10-methenyltetrahydrofolate and then the hydrolysis of 5,10-methenyltetrahydrofolate to 10-formyltetrahydrofolate. This Polynucleobacter necessarius subsp. necessarius (strain STIR1) protein is Bifunctional protein FolD.